A 314-amino-acid chain; its full sequence is Dihydropteroate synthase (314 aa).

The region spanning 10–294 is the Pterin-binding domain; sequence TVICGIINVT…DVASHRMAVE (285 aa). Asn-17 is a binding site for Mg(2+). (7,8-dihydropterin-6-yl)methyl diphosphate-binding positions include Thr-57, Asp-91, Asn-110, Asp-201, Lys-237, and 282–284; that span reads RVH.

It belongs to the DHPS family. As to quaternary structure, homodimer or homotrimer. Mg(2+) serves as cofactor.

It carries out the reaction (7,8-dihydropterin-6-yl)methyl diphosphate + 4-aminobenzoate = 7,8-dihydropteroate + diphosphate. Its pathway is cofactor biosynthesis; tetrahydrofolate biosynthesis; 7,8-dihydrofolate from 2-amino-4-hydroxy-6-hydroxymethyl-7,8-dihydropteridine diphosphate and 4-aminobenzoate: step 1/2. Catalyzes the condensation of para-aminobenzoate (pABA) with 6-hydroxymethyl-7,8-dihydropterin diphosphate (DHPt-PP) to form 7,8-dihydropteroate (H2Pte), the immediate precursor of folate derivatives. This chain is Dihydropteroate synthase (sulA), found in Streptococcus pneumoniae serotype 4 (strain ATCC BAA-334 / TIGR4).